A 426-amino-acid polypeptide reads, in one-letter code: Gamma-glutamyl phosphate reductase (426 aa).

It belongs to the gamma-glutamyl phosphate reductase family.

Its subcellular location is the cytoplasm. The enzyme catalyses L-glutamate 5-semialdehyde + phosphate + NADP(+) = L-glutamyl 5-phosphate + NADPH + H(+). Its pathway is amino-acid biosynthesis; L-proline biosynthesis; L-glutamate 5-semialdehyde from L-glutamate: step 2/2. Functionally, catalyzes the NADPH-dependent reduction of L-glutamate 5-phosphate into L-glutamate 5-semialdehyde and phosphate. The product spontaneously undergoes cyclization to form 1-pyrroline-5-carboxylate. The chain is Gamma-glutamyl phosphate reductase from Delftia acidovorans (strain DSM 14801 / SPH-1).